A 447-amino-acid chain; its full sequence is Dirigent protein 10 (447 aa).

Positions 1–21 (MAGQKILSLLVIALVVTFAAA) are cleaved as a signal peptide. Gly residues predominate over residues 74–85 (SGSTGSGLGAGT). Residues 74 to 123 (SGSTGSGLGAGTGSIPSSGSGPGLLPTASSVPGSLAGGGSGSLPTTGSAT) form a disordered region. A compositionally biased stretch (low complexity) spans 86–107 (GSIPSSGSGPGLLPTASSVPGS).

The protein belongs to the plant dirigent protein family. In terms of assembly, homodimer. In roots, mostly detected in root endodermis and quiescent center, and, to a lower extent, in root stele and cortex. Expressed in root vascular cylinder, flowers, siliques, cotyledon and leaf veins, and leaf margins. Present in the basal region of rosette leaf trichomes and in developing xylem.

It localises to the secreted. The protein localises to the extracellular space. It is found in the apoplast. In terms of biological role, dirigent proteins impart stereoselectivity on the phenoxy radical-coupling reaction, yielding optically active lignans from two molecules of coniferyl alcohol in the biosynthesis of lignans, flavonolignans, and alkaloids and thus plays a central role in plant secondary metabolism. Regulates suberin accumulation in roots. This is Dirigent protein 10 (DIR10) from Arabidopsis thaliana (Mouse-ear cress).